The sequence spans 123 residues: Ribosome-binding factor A (123 aa).

It belongs to the RbfA family. As to quaternary structure, monomer. Binds 30S ribosomal subunits, but not 50S ribosomal subunits or 70S ribosomes.

It localises to the cytoplasm. In terms of biological role, one of several proteins that assist in the late maturation steps of the functional core of the 30S ribosomal subunit. Associates with free 30S ribosomal subunits (but not with 30S subunits that are part of 70S ribosomes or polysomes). Required for efficient processing of 16S rRNA. May interact with the 5'-terminal helix region of 16S rRNA. In Cupriavidus taiwanensis (strain DSM 17343 / BCRC 17206 / CCUG 44338 / CIP 107171 / LMG 19424 / R1) (Ralstonia taiwanensis (strain LMG 19424)), this protein is Ribosome-binding factor A.